A 448-amino-acid polypeptide reads, in one-letter code: Bifunctional protein GlmU (448 aa).

The tract at residues 1-232 is pyrophosphorylase; that stretch reads MSDRSLLVVV…ADEVAGVNSR (232 aa). UDP-N-acetyl-alpha-D-glucosamine contacts are provided by residues 11–14, Lys-25, Gln-78, and 83–84; these read LAAG and GT. Asp-108 is a binding site for Mg(2+). 4 residues coordinate UDP-N-acetyl-alpha-D-glucosamine: Gly-144, Glu-158, Asn-173, and Asn-230. A Mg(2+)-binding site is contributed by Asn-230. Residues 233 to 253 form a linker region; it reads VQLAEAEAILQRRLRLAAMAG. The segment at 254 to 448 is N-acetyltransferase; the sequence is GATLVAPETV…FRAARSKPKG (195 aa). UDP-N-acetyl-alpha-D-glucosamine contacts are provided by Arg-319 and Lys-337. Residue His-349 is the Proton acceptor of the active site. Residues Tyr-352 and Asn-363 each coordinate UDP-N-acetyl-alpha-D-glucosamine. Acetyl-CoA is bound by residues Ala-366, 372–373, Thr-409, and Arg-426; that span reads NY.

It in the N-terminal section; belongs to the N-acetylglucosamine-1-phosphate uridyltransferase family. The protein in the C-terminal section; belongs to the transferase hexapeptide repeat family. In terms of assembly, homotrimer. Mg(2+) serves as cofactor.

The protein localises to the cytoplasm. It catalyses the reaction alpha-D-glucosamine 1-phosphate + acetyl-CoA = N-acetyl-alpha-D-glucosamine 1-phosphate + CoA + H(+). The enzyme catalyses N-acetyl-alpha-D-glucosamine 1-phosphate + UTP + H(+) = UDP-N-acetyl-alpha-D-glucosamine + diphosphate. It participates in nucleotide-sugar biosynthesis; UDP-N-acetyl-alpha-D-glucosamine biosynthesis; N-acetyl-alpha-D-glucosamine 1-phosphate from alpha-D-glucosamine 6-phosphate (route II): step 2/2. Its pathway is nucleotide-sugar biosynthesis; UDP-N-acetyl-alpha-D-glucosamine biosynthesis; UDP-N-acetyl-alpha-D-glucosamine from N-acetyl-alpha-D-glucosamine 1-phosphate: step 1/1. The protein operates within bacterial outer membrane biogenesis; LPS lipid A biosynthesis. In terms of biological role, catalyzes the last two sequential reactions in the de novo biosynthetic pathway for UDP-N-acetylglucosamine (UDP-GlcNAc). The C-terminal domain catalyzes the transfer of acetyl group from acetyl coenzyme A to glucosamine-1-phosphate (GlcN-1-P) to produce N-acetylglucosamine-1-phosphate (GlcNAc-1-P), which is converted into UDP-GlcNAc by the transfer of uridine 5-monophosphate (from uridine 5-triphosphate), a reaction catalyzed by the N-terminal domain. The sequence is that of Bifunctional protein GlmU from Xanthobacter autotrophicus (strain ATCC BAA-1158 / Py2).